Here is a 502-residue protein sequence, read N- to C-terminus: Histidine--tRNA ligase (502 aa).

This sequence belongs to the class-II aminoacyl-tRNA synthetase family. As to quaternary structure, homodimer.

The protein resides in the cytoplasm. The enzyme catalyses tRNA(His) + L-histidine + ATP = L-histidyl-tRNA(His) + AMP + diphosphate + H(+). The protein is Histidine--tRNA ligase (hisS) of Brucella suis biovar 1 (strain 1330).